A 408-amino-acid chain; its full sequence is Dicamba O-demethylase 1, ferredoxin reductase component (408 aa).

Residues glycine 14, lysine 49, valine 82, arginine 130, aspartate 279, and valine 298 each coordinate FAD.

Belongs to the FAD-dependent oxidoreductase family. As to quaternary structure, monomer. The dicamba O-demethylase multicomponent enzyme system is composed of an oxygenase component (DdmC) and an electron transfer component formed by a ferredoxin reductase (DdmA1) and a ferredoxin (DdmB). In vitro, dicamba O-demethylase assays in which DdmA2 is substituted for DdmA1 demonstrate that the two enzymes possess nearly identical activities. It depends on FAD as a cofactor.

It carries out the reaction 2 reduced [2Fe-2S]-[ferredoxin] + NAD(+) + H(+) = 2 oxidized [2Fe-2S]-[ferredoxin] + NADH. Its function is as follows. Component of the dicamba O-demethylase multicomponent enzyme system involved in the degradation of the herbicide dicamba. In vitro, catalyzes the transfers of electrons from ferredoxin (DdmB) to NADH. Both NADH and NADPH support enzyme activity, with NADH being markedly more effective than NADPH. This Stenotrophomonas maltophilia (Pseudomonas maltophilia) protein is Dicamba O-demethylase 1, ferredoxin reductase component.